The primary structure comprises 246 residues: NH(3)-dependent NAD(+) synthetase (246 aa).

29–36 is a binding site for ATP; it reads GLSGGIDS. Asp35 is a Mg(2+) binding site. Residue Arg110 participates in deamido-NAD(+) binding. Thr130 is an ATP binding site. Glu135 contacts Mg(2+). Residues Lys159 and Ser181 each coordinate ATP.

It belongs to the NAD synthetase family. Homodimer.

It carries out the reaction deamido-NAD(+) + NH4(+) + ATP = AMP + diphosphate + NAD(+) + H(+). It functions in the pathway cofactor biosynthesis; NAD(+) biosynthesis; NAD(+) from deamido-NAD(+) (ammonia route): step 1/1. In terms of biological role, catalyzes the ATP-dependent amidation of deamido-NAD to form NAD. Uses ammonia as a nitrogen source. The protein is NH(3)-dependent NAD(+) synthetase of Campylobacter jejuni subsp. doylei (strain ATCC BAA-1458 / RM4099 / 269.97).